The following is a 501-amino-acid chain: Symplectin (501 aa).

The CN hydrolase domain maps to 20 to 287; that stretch reads PKTDMETREE…SKLLVAEILP (268 aa). E60 acts as the Proton acceptor in catalysis. The active-site Proton donor is the K163. C196 (nucleophile) is an active-site residue. At C390 the chain carries S-(coelenterazin-3a-yl)cysteine.

The protein belongs to the carbon-nitrogen hydrolase superfamily. BTD/VNN family. In terms of tissue distribution, photogenic gland (at protein level).

Its function is as follows. Monovalent ion-dependent bioluminescence photoprotein. Displays an emission peak at 470 nm (blue light). Trace amounts of monovalent ion trigger the intramolecular oxidation of the chromophore, didehydrocoelenterazine, with the emission of light. The chain is Symplectin from Sthenoteuthis oualaniensis (Purpleback flying squid).